The primary structure comprises 265 residues: MQALWPLLLSALPALLGASSLFVEKESNGSRICKPAPQWEIDGKTPMKELLGNVVVVALLKASUHFCLTQAARLGDLRDKLANGGLTNISFMVVNEQDSQSRAMYWELKRRTAQDIPVYQQSPLQNDVWEILEGDKDDFLVYDRCGYLTFHIVLPFSFLHYPYIEAAIRATYHKNMCNCSLNANFSISESSDSTKNDPAGENNQRPNSTEPVTAAHHHHHQQHEPHHHHHNPYPNSHKKSGDSDVTGKPKEPPHHSHQEHVHNHR.

Positions 1–18 (MQALWPLLLSALPALLGA) are cleaved as a signal peptide. N28 is a glycosylation site (N-linked (GlcNAc...) asparagine). A non-standard amino acid (selenocysteine) is located at residue U64. N-linked (GlcNAc...) asparagine glycosylation is found at N88, N178, N184, and N207. The tract at residues 188-265 (SESSDSTKND…SHQEHVHNHR (78 aa)) is disordered. A compositionally biased stretch (polar residues) spans 201-211 (ENNQRPNSTEP). Residues 215 to 231 (AHHHHHQQHEPHHHHHN) show a composition bias toward basic residues. The span at 239–265 (KSGDSDVTGKPKEPPHHSHQEHVHNHR) shows a compositional bias: basic and acidic residues.

It is found in the secreted. Might be responsible for some of the extracellular antioxidant defense properties of selenium. The sequence is that of Selenoprotein Pb (sepp1b) from Danio rerio (Zebrafish).